The chain runs to 361 residues: Phosphoserine aminotransferase (361 aa).

Residue arginine 43 coordinates L-glutamate. Pyridoxal 5'-phosphate is bound by residues 77-78 (AS), tryptophan 103, threonine 153, aspartate 173, and glutamine 196. At lysine 197 the chain carries N6-(pyridoxal phosphate)lysine. Residue 238 to 239 (NT) coordinates pyridoxal 5'-phosphate.

The protein belongs to the class-V pyridoxal-phosphate-dependent aminotransferase family. SerC subfamily. Homodimer. The cofactor is pyridoxal 5'-phosphate.

The protein localises to the cytoplasm. The catalysed reaction is O-phospho-L-serine + 2-oxoglutarate = 3-phosphooxypyruvate + L-glutamate. It carries out the reaction 4-(phosphooxy)-L-threonine + 2-oxoglutarate = (R)-3-hydroxy-2-oxo-4-phosphooxybutanoate + L-glutamate. It functions in the pathway amino-acid biosynthesis; L-serine biosynthesis; L-serine from 3-phospho-D-glycerate: step 2/3. The protein operates within cofactor biosynthesis; pyridoxine 5'-phosphate biosynthesis; pyridoxine 5'-phosphate from D-erythrose 4-phosphate: step 3/5. Functionally, catalyzes the reversible conversion of 3-phosphohydroxypyruvate to phosphoserine and of 3-hydroxy-2-oxo-4-phosphonooxybutanoate to phosphohydroxythreonine. The polypeptide is Phosphoserine aminotransferase (Pseudomonas syringae pv. syringae (strain B728a)).